Consider the following 95-residue polypeptide: Co-chaperonin GroES (95 aa).

It belongs to the GroES chaperonin family. In terms of assembly, heptamer of 7 subunits arranged in a ring. Interacts with the chaperonin GroEL.

It localises to the cytoplasm. In terms of biological role, together with the chaperonin GroEL, plays an essential role in assisting protein folding. The GroEL-GroES system forms a nano-cage that allows encapsulation of the non-native substrate proteins and provides a physical environment optimized to promote and accelerate protein folding. GroES binds to the apical surface of the GroEL ring, thereby capping the opening of the GroEL channel. In Oleidesulfovibrio alaskensis (strain ATCC BAA-1058 / DSM 17464 / G20) (Desulfovibrio alaskensis), this protein is Co-chaperonin GroES.